The sequence spans 645 residues: MDDIADRMRMDAGEVTLVNHNSVFKTHLLPQTGFPEDQLSLSDQQILSSRQGYLDRSFTCSTRSAAYNPSYYSDNPSSDSFLGSGDLRTFGQSANGQWRNSTPSSSSSLQKSRNSRSLYLETRKTSSGLSNIFAGKSNHHCHVSAYEKSFPIKPVPSPSWSGSCRRSLLSPKKTQRRHVSTAEETVQEEEREIYRQLLQMVTGKQFTIAKPTTHFPLHLSRCLSSSKNTLKDSLFKNGNSCASQIIGSDTSSSGSASILTNQEQLSHSVYSLSSYTPDVVAFGSKDSGTLHHPHHHHSVPHQPDNLAASNTQSEGSDSVILLKVKDSQTPTPSSTFFQAELWIKELTSVYDSRARERLRQIEEQKALALQLQNQRLQEREHSVHDSVELHLRVPLEKEIPVTVAQETQKKGHKLTDSEDEFPEITEEMEKEIKNVFRNGNQDEVLSEAFRLTITRKDIQTLNHLNWLNDEIINFYMNMLMERSKEKGLPSVHAFNTFFFTKLKTAGYQAVKRWTKKVDVFSVDILLVPIHLGVHWCLAVVDFRKKNITYYDSMGGINNEACRILLQYLKQESIDKKRKEFDTNGWQLFSKKSQEIPQQMNGSDCGMFACKYADCITKDRPINFTQQHMPYFRKRMVWEILHRKLL.

Residues 1–200 form an interaction with CCAR2 region; sequence MDDIADRMRM…REIYRQLLQM (200 aa). Phosphoserine is present on residues S57, S117, and S157. The segment at 92–117 is disordered; sequence QSANGQWRNSTPSSSSSLQKSRNSRS. The segment covering 99-117 has biased composition (low complexity); sequence RNSTPSSSSSLQKSRNSRS. The Nuclear localization signal signature appears at 171–177; sequence PKKTQRR. A disordered region spans residues 285–313; that stretch reads KDSGTLHHPHHHHSVPHQPDNLAASNTQS. Protease stretches follow at residues 451–614 and 451–615; these read LTIT…YADC and LTIT…ADCI. Active-site residues include H534 and D551. Residues 575–578 carry the Nuclear localization signal motif; that stretch reads KKRK. Residue C604 is the Nucleophile of the active site. The short motif at 629-635 is the Nuclear localization signal element; sequence PYFRKRM. The Nuclear export signal motif lies at 636-645; it reads VWEILHRKLL.

It belongs to the peptidase C48 family. Interacts with RBM33; promoting ALKBH5 desumoylation and subsequent activation.

It is found in the nucleus. Its subcellular location is the cytoplasm. Functionally, protease that catalyzes two essential functions in the SUMO pathway. The first is the hydrolysis of an alpha-linked peptide bond at the C-terminal end of the small ubiquitin-like modifier (SUMO) propeptides, SUMO1, SUMO2 and SUMO3 leading to the mature form of the proteins. The second is the deconjugation of SUMO1, SUMO2 and SUMO3 from targeted proteins, by cleaving an epsilon-linked peptide bond between the C-terminal glycine of the mature SUMO and the lysine epsilon-amino group of the target protein. Deconjugates SUMO1 from HIPK2. Deconjugates SUMO1 from HDAC1 and BHLHE40/DEC1, which decreases its transcriptional repression activity. Deconjugates SUMO1 from CLOCK, which decreases its transcriptional activation activity. Deconjugates SUMO2 from MTA1. Inhibits N(6)-methyladenosine (m6A) RNA methylation by mediating SUMO1 deconjugation from METTL3 and ALKBH5: METTL3 inhibits the m6A RNA methyltransferase activity, while ALKBH5 desumoylation promotes m6A demethylation. Desumoylates CCAR2 which decreases its interaction with SIRT1. Deconjugates SUMO1 from GPS2. The polypeptide is Sentrin-specific protease 1 (SENP1) (Pongo abelii (Sumatran orangutan)).